A 215-amino-acid chain; its full sequence is MSGSYAPIEDSADELSVHSGNDNEIDLEKGLLPKCNTGNGGTTPCSEPPHYDSDAVVEMDMYENNIYMRTFKLRPFAKSGVTNSSNVVFQMKTYENNRHMQTFRLRPFAKNGVTNGVKLAQSLFLLLPFNFIFFACLFFRKASFTDFSLMGWILFGIWCLTCFLSSFILYAYHESWTKFARERSQEFSLILFGLLFPGIVTMVVFYALYMRSMYG.

A disordered region spans residues 1–21; it reads MSGSYAPIEDSADELSVHSGN. The next 3 helical transmembrane spans lie at 119-139, 149-169, and 189-209; these read LAQS…CLFF, LMGW…SFIL, and LILF…YALY.

This sequence belongs to the WTF family.

It localises to the spore membrane. Functionally, may act in meiotic drive. This Schizosaccharomyces pombe (strain 972 / ATCC 24843) (Fission yeast) protein is Wtf element wtf7.